The primary structure comprises 142 residues: Small ribosomal subunit protein uS12 (142 aa).

Residues 1 to 44 (MANGKYAARKLKKDRQKHRWSDTDYARRERGLGKKSDPLEGAPQ) are disordered. Residues 7-18 (AARKLKKDRQKH) show a composition bias toward basic residues. A compositionally biased stretch (basic and acidic residues) spans 19–38 (RWSDTDYARRERGLGKKSDP).

This sequence belongs to the universal ribosomal protein uS12 family. As to quaternary structure, part of the 30S ribosomal subunit.

Functionally, with S4 and S5 plays an important role in translational accuracy. Located at the interface of the 30S and 50S subunits. The protein is Small ribosomal subunit protein uS12 of Haloarcula marismortui (strain ATCC 43049 / DSM 3752 / JCM 8966 / VKM B-1809) (Halobacterium marismortui).